The primary structure comprises 251 residues: Keratin-associated protein 10-10 (251 aa).

15 consecutive repeat copies span residues 26 to 30 (CCEPC), 31 to 35 (CCAPA), 52 to 56 (CCQTA), 84 to 88 (CCTSS), 94 to 98 (CCVPV), 99 to 103 (CCVPV), 104 to 109 (CCVPVC), 126 to 130 (CCQQS), 136 to 140 (CCTSS), 146 to 150 (CCVPV), 168 to 172 (CCQQS), 178 to 182 (CCTAS), 183 to 187 (CCRPS), 202 to 206 (CCVPV), and 220 to 224 (CCRTA). The interval 26-224 (CCEPCCCAPA…SCQPSCCRTA (199 aa)) is 15 X 5 AA repeats of C-C-X(3).

This sequence belongs to the KRTAP type 10 family. Interacts with hair keratins. As to expression, restricted to a narrow region of the hair fiber cuticle, lying approximately 20 cell layers above the apex of the dermal papilla of the hair root; not detected in any other tissues.

In the hair cortex, hair keratin intermediate filaments are embedded in an interfilamentous matrix, consisting of hair keratin-associated proteins (KRTAP), which are essential for the formation of a rigid and resistant hair shaft through their extensive disulfide bond cross-linking with abundant cysteine residues of hair keratins. The matrix proteins include the high-sulfur and high-glycine-tyrosine keratins. The protein is Keratin-associated protein 10-10 (KRTAP10-10) of Homo sapiens (Human).